We begin with the raw amino-acid sequence, 429 residues long: Glutamyl-tRNA reductase (429 aa).

Substrate contacts are provided by residues 49-52, Ser-107, 112-114, and Gln-118; these read TCNR and EPQ. Residue Cys-50 is the Nucleophile of the active site. 187–192 contributes to the NADP(+) binding site; it reads GAGKTI.

This sequence belongs to the glutamyl-tRNA reductase family. In terms of assembly, homodimer.

The catalysed reaction is (S)-4-amino-5-oxopentanoate + tRNA(Glu) + NADP(+) = L-glutamyl-tRNA(Glu) + NADPH + H(+). It participates in porphyrin-containing compound metabolism; protoporphyrin-IX biosynthesis; 5-aminolevulinate from L-glutamyl-tRNA(Glu): step 1/2. In terms of biological role, catalyzes the NADPH-dependent reduction of glutamyl-tRNA(Glu) to glutamate 1-semialdehyde (GSA). This Marinobacter nauticus (strain ATCC 700491 / DSM 11845 / VT8) (Marinobacter aquaeolei) protein is Glutamyl-tRNA reductase.